Here is a 142-residue protein sequence, read N- to C-terminus: Transcriptional regulator MraZ (142 aa).

2 SpoVT-AbrB domains span residues 5 to 47 and 76 to 119; these read EYPY…PLAS and ANKA…NPGR.

Belongs to the MraZ family. As to quaternary structure, forms oligomers.

Its subcellular location is the cytoplasm. It localises to the nucleoid. The chain is Transcriptional regulator MraZ from Deinococcus deserti (strain DSM 17065 / CIP 109153 / LMG 22923 / VCD115).